The chain runs to 503 residues: Maturase K (503 aa).

This sequence belongs to the intron maturase 2 family. MatK subfamily.

It localises to the plastid. The protein localises to the chloroplast. Usually encoded in the trnK tRNA gene intron. Probably assists in splicing its own and other chloroplast group II introns. This Rosa rugosa (Rugosa rose) protein is Maturase K.